Reading from the N-terminus, the 134-residue chain is Methylglyoxal synthase (134 aa).

The MGS-like domain maps to 1 to 134 (MHIALIAHDE…DWRDLRRNDE (134 aa)). Substrate is bound by residues His8, Lys12, 34 to 37 (TGTT), and 54 to 55 (SG). Asp60 acts as the Proton donor/acceptor in catalysis. Residue His87 coordinates substrate.

The protein belongs to the methylglyoxal synthase family.

The catalysed reaction is dihydroxyacetone phosphate = methylglyoxal + phosphate. In terms of biological role, catalyzes the formation of methylglyoxal from dihydroxyacetone phosphate. This Listeria monocytogenes serotype 4b (strain CLIP80459) protein is Methylglyoxal synthase.